We begin with the raw amino-acid sequence, 548 residues long: Chaperonin GroEL (548 aa).

Residues 30–33 (TLGP), Lys51, 87–91 (DGTTT), Gly415, 479–481 (NAA), and Asp495 each bind ATP. Residues 526 to 548 (KEDKSSDLGSAPAGGMGGMGGMM) are disordered. The span at 537–548 (PAGGMGGMGGMM) shows a compositional bias: gly residues.

This sequence belongs to the chaperonin (HSP60) family. As to quaternary structure, forms a cylinder of 14 subunits composed of two heptameric rings stacked back-to-back. Interacts with the co-chaperonin GroES.

The protein resides in the cytoplasm. It catalyses the reaction ATP + H2O + a folded polypeptide = ADP + phosphate + an unfolded polypeptide.. Together with its co-chaperonin GroES, plays an essential role in assisting protein folding. The GroEL-GroES system forms a nano-cage that allows encapsulation of the non-native substrate proteins and provides a physical environment optimized to promote and accelerate protein folding. This is Chaperonin GroEL from Buchnera aphidicola subsp. Pterocomma populeum.